The following is a 253-amino-acid chain: Probable U3 small nucleolar RNA-associated protein 11 (253 aa).

A disordered region spans residues methionine 1–glutamine 21. Glycyl lysine isopeptide (Lys-Gly) (interchain with G-Cter in SUMO2) cross-links involve residues lysine 74, lysine 83, and lysine 86. Phosphothreonine is present on threonine 90. Glycyl lysine isopeptide (Lys-Gly) (interchain with G-Cter in SUMO2) cross-links involve residues lysine 103, lysine 120, lysine 143, lysine 144, lysine 180, lysine 211, lysine 218, lysine 235, and lysine 236. Phosphoserine is present on serine 241. Lysine 246 is covalently cross-linked (Glycyl lysine isopeptide (Lys-Gly) (interchain with G-Cter in SUMO2)).

It belongs to the UTP11 family. As to quaternary structure, part of the small subunit (SSU) processome, composed of more than 70 proteins and the RNA chaperone small nucleolar RNA (snoRNA) U3.

The protein resides in the nucleus. It is found in the nucleolus. Part of the small subunit (SSU) processome, first precursor of the small eukaryotic ribosomal subunit. During the assembly of the SSU processome in the nucleolus, many ribosome biogenesis factors, an RNA chaperone and ribosomal proteins associate with the nascent pre-rRNA and work in concert to generate RNA folding, modifications, rearrangements and cleavage as well as targeted degradation of pre-ribosomal RNA by the RNA exosome. Involved in nucleolar processing of pre-18S ribosomal RNA. The chain is Probable U3 small nucleolar RNA-associated protein 11 from Rattus norvegicus (Rat).